We begin with the raw amino-acid sequence, 436 residues long: 3-ketoacyl-CoA thiolase (436 aa).

Cysteine 99 functions as the Acyl-thioester intermediate in the catalytic mechanism. Active-site proton acceptor residues include histidine 392 and cysteine 422.

Belongs to the thiolase-like superfamily. Thiolase family. Heterotetramer of two alpha chains (FadJ) and two beta chains (FadI).

The protein localises to the cytoplasm. The enzyme catalyses an acyl-CoA + acetyl-CoA = a 3-oxoacyl-CoA + CoA. It functions in the pathway lipid metabolism; fatty acid beta-oxidation. In terms of biological role, catalyzes the final step of fatty acid oxidation in which acetyl-CoA is released and the CoA ester of a fatty acid two carbons shorter is formed. The protein is 3-ketoacyl-CoA thiolase of Cronobacter sakazakii (strain ATCC BAA-894) (Enterobacter sakazakii).